Consider the following 129-residue polypeptide: Sm-like protein LSM4 (129 aa).

The 74-residue stretch at 2 to 75 folds into the Sm domain; that stretch reads LPLSLLKTAQ…IKYLRVPDEV (74 aa). Positions 79-90 are enriched in basic and acidic residues; the sequence is VQEEKTRTDRKP. The interval 79–129 is disordered; that stretch reads VQEEKTRTDRKPPGVGRGRGRGVDDGGARGRGRGTSMGKMGGNRGAGRGRG. Over residues 111–129 the composition is skewed to gly residues; the sequence is RGTSMGKMGGNRGAGRGRG.

Belongs to the snRNP Sm proteins family. In terms of assembly, component of the heptameric LSM1-LSM7 complex that forms a seven-membered ring structure with a donut shape. The LSM subunits are arranged in the order LSM1, LSM2, LSM3, LSM6, LSM5, LSM7 and LSM4. LSM4 subunit interacts only with its two neighboring subunits, LSM1A or LSM1B and LSM7. Component of the heptameric LSM2-LSM8 complex that forms a seven-membered ring structure with a donut shape. The LSM subunits are arranged in the order LSM8, LSM2, LSM3, LSM6, LSM5, LSM7 and LSM4. LSM4 subunit interacts only with its two neighboring subunits, LSM8 and LSM7. In terms of processing, methylated by PMRT15/SKB1 in response to salt stress or abscisic acid (ABA) treatment. As to expression, expressed in roots, leaves, stems, flowers and siliques.

The protein localises to the cytoplasm. It is found in the nucleus. In terms of biological role, component of LSM protein complexes, which are involved in RNA processing. Component of the cytoplasmic LSM1-LSM7 complex which is involved in mRNA degradation by promoting decapping and leading to accurate 5'-3' mRNA decay. The cytoplasmic LSM1-LSM7 complex regulates developmental gene expression by the decapping of specific development-related transcripts. Component of the nuclear LSM2-LSM8 complex which is involved splicing nuclear mRNAs. LSM2-LSM8 binds directly to the U6 small nuclear RNAs (snRNAs) and is essential for accurate splicing of selected development-related mRNAs through the stabilization of the spliceosomal U6 snRNA. Plays a critical role in the regulation of development-related gene expression. This Arabidopsis thaliana (Mouse-ear cress) protein is Sm-like protein LSM4.